Here is a 427-residue protein sequence, read N- to C-terminus: Neuronal pentraxin-2 (427 aa).

An N-terminal signal peptide occupies residues 1-17 (MLALLAAGVAFAVVVLA). N-linked (GlcNAc...) asparagine glycans are attached at residues Asn-144 and Asn-185. Residues 219 to 420 (DAFKVSLPFR…GASKWPVETC (202 aa)) enclose the Pentraxin (PTX) domain. Residues Cys-249 and Cys-309 are joined by a disulfide bond. Residues Asn-273, Glu-351, Gln-352, Asp-353, and Gln-363 each contribute to the Ca(2+) site. N-linked (GlcNAc...) asparagine glycosylation is present at Asn-389.

In terms of assembly, homooligomer or heterooligomer (probably pentamer) with neuronal pentraxin receptor (NPTXR). The cofactor is Ca(2+). In terms of tissue distribution, testis specific.

It localises to the cytoplasmic vesicle. The protein resides in the secretory vesicle. The protein localises to the acrosome lumen. Functionally, may be involved in binding, concentrating, and sorting soluble glycoproteins or glycolipids that are destined for the acrosome. The chain is Neuronal pentraxin-2 (NPTX2) from Cavia porcellus (Guinea pig).